The primary structure comprises 227 residues: UPF0758 protein Rxyl_1530 (227 aa).

An MPN domain is found at 106-227 (VISSPADVDG…YFSMKEHGML (122 aa)). Residues His177, His179, and Asp190 each contribute to the Zn(2+) site. The JAMM motif signature appears at 177-190 (HNHPSGRVEPSRED).

This sequence belongs to the UPF0758 family.

This Rubrobacter xylanophilus (strain DSM 9941 / JCM 11954 / NBRC 16129 / PRD-1) protein is UPF0758 protein Rxyl_1530.